Consider the following 142-residue polypeptide: Phosphoribosyl-AMP cyclohydrolase (142 aa).

D85 is a Mg(2+) binding site. Zn(2+) is bound at residue C86. 2 residues coordinate Mg(2+): D87 and D89. Zn(2+) contacts are provided by C102 and C109. Residues 120-142 are disordered; it reads GEPPTPVGAGERQPASGTADAAP.

It belongs to the PRA-CH family. Homodimer. Mg(2+) is required as a cofactor. Requires Zn(2+) as cofactor.

It is found in the cytoplasm. It carries out the reaction 1-(5-phospho-beta-D-ribosyl)-5'-AMP + H2O = 1-(5-phospho-beta-D-ribosyl)-5-[(5-phospho-beta-D-ribosylamino)methylideneamino]imidazole-4-carboxamide. Its pathway is amino-acid biosynthesis; L-histidine biosynthesis; L-histidine from 5-phospho-alpha-D-ribose 1-diphosphate: step 3/9. Functionally, catalyzes the hydrolysis of the adenine ring of phosphoribosyl-AMP. The chain is Phosphoribosyl-AMP cyclohydrolase from Acidothermus cellulolyticus (strain ATCC 43068 / DSM 8971 / 11B).